The following is a 472-amino-acid chain: 3-isopropylmalate dehydratase large subunit (472 aa).

Residues 61-80 are disordered; sequence TPDHNVPTTQKERASGVEGI. Residues C353, C414, and C417 each contribute to the [4Fe-4S] cluster site.

Belongs to the aconitase/IPM isomerase family. LeuC type 1 subfamily. In terms of assembly, heterodimer of LeuC and LeuD. [4Fe-4S] cluster is required as a cofactor.

The enzyme catalyses (2R,3S)-3-isopropylmalate = (2S)-2-isopropylmalate. Its pathway is amino-acid biosynthesis; L-leucine biosynthesis; L-leucine from 3-methyl-2-oxobutanoate: step 2/4. Catalyzes the isomerization between 2-isopropylmalate and 3-isopropylmalate, via the formation of 2-isopropylmaleate. The chain is 3-isopropylmalate dehydratase large subunit from Saccharophagus degradans (strain 2-40 / ATCC 43961 / DSM 17024).